A 199-amino-acid polypeptide reads, in one-letter code: Small ribosomal subunit protein uS4 (199 aa).

The region spanning 94–157 (SRLDNIVYRM…QNVPTILASI (64 aa)) is the S4 RNA-binding domain.

Belongs to the universal ribosomal protein uS4 family. As to quaternary structure, part of the 30S ribosomal subunit. Contacts protein S5. The interaction surface between S4 and S5 is involved in control of translational fidelity.

One of the primary rRNA binding proteins, it binds directly to 16S rRNA where it nucleates assembly of the body of the 30S subunit. Its function is as follows. With S5 and S12 plays an important role in translational accuracy. The chain is Small ribosomal subunit protein uS4 from Mycoplasma mobile (strain ATCC 43663 / 163K / NCTC 11711) (Mesomycoplasma mobile).